The following is a 75-amino-acid chain: Serine rich endogenous peptide 20 (75 aa).

The signal sequence occupies residues 1–25 (MYKLTLCILTLSFLLLSGLSNTVLA). The SCOOP motif signature appears at 52 to 66 (KIGASGSNSGRAPSC). A disordered region spans residues 54–75 (GASGSNSGRAPSCNNSCKPNRP). The SxS motif essential for MIK2 binding motif lies at 56–58 (SGS). The segment covering 56–75 (SGSNSGRAPSCNNSCKPNRP) has biased composition (polar residues).

Belongs to the serine rich endogenous peptide (SCOOP) phytocytokine family. In terms of assembly, interacts with MIK2 (via extracellular leucine-rich repeat domain); this interaction triggers the formation of complex between MIK2 and the BAK1/SERK3 and SERK4 coreceptors, and subsequent BAK1 activation by phosphorylation. As to expression, mostly expressed in roots.

The protein localises to the cell membrane. It localises to the secreted. Its subcellular location is the extracellular space. The protein resides in the apoplast. Functionally, brassicaceae-specific phytocytokine (plant endogenous peptide released into the apoplast) perceived by MIK2 in a BAK1/SERK3 and SERK4 coreceptors-dependent manner, that modulates various physiological and antimicrobial processes including growth prevention and reactive oxygen species (ROS) response regulation. Inhibits root growth. The sequence is that of Serine rich endogenous peptide 20 from Arabidopsis thaliana (Mouse-ear cress).